The primary structure comprises 317 residues: MALRGWRLFGLAGTILVYIGGILFLSFVSLQSPQQKRNHARGYGEFETLRNRDLGLLGKKPPLQWCTELRYMDSPPPSPKAYKLLQTFPVNDGHQKSSNGRELTALVSFPGSGNTWLRYLLQQSTGILTGSVYKDYGLLKSGFPAENVANSSVLVVKTHEWGPQAWAPYGKAILLVRDPEKAILAEFNRQSGGHVGFASPDRYRRTKGRYWTQFVKNKLWAWEQTNLSWAKNFTGDVKLVFYDDLVENVEGTLRSILKFLNFPVNDELLACALMRKEGIYRRKKRILQFDPYSPAMHTAIDEKRSEVYAALGRFRSH.

The chain crosses the membrane as a helical span at residues 8 to 28 (LFGLAGTILVYIGGILFLSFV). 3 N-linked (GlcNAc...) asparagine glycosylation sites follow: asparagine 150, asparagine 226, and asparagine 232.

This sequence belongs to the WSCD family.

The protein localises to the membrane. This chain is WSCD family member AAEL009094, found in Aedes aegypti (Yellowfever mosquito).